We begin with the raw amino-acid sequence, 302 residues long: Nucleoside kinase (302 aa).

Asp-17, Gln-33, Gly-43, and Asn-47 together coordinate substrate. Residue Gln-109 participates in ATP binding. Residues 111–113 (TFF) and Gln-163 contribute to the substrate site. ATP-binding positions include Asn-186 and 214–219 (TKGSKG). Residue Asp-247 coordinates substrate. The active-site Proton acceptor is Asp-247.

As to quaternary structure, homodimer. The cofactor is Mg(2+). Mn(2+) serves as cofactor.

It catalyses the reaction cytidine + ATP = CMP + ADP + H(+). The enzyme catalyses guanosine + ATP = GMP + ADP + H(+). It carries out the reaction inosine + ATP = IMP + ADP + H(+). Functionally, catalyzes the phosphorylation of a wide range of nucleosides to yield nucleoside monophosphates. Shows the highest activity for inosine, guanosine and cytidine, but very poor kinase activity with adenosine, thymidine, uridine and xanthosine. ATP is the best phosphate donor, but can also use ITP and GTP. Shows extremely low activity with fructose-6-phosphate. The polypeptide is Nucleoside kinase (Methanocaldococcus jannaschii (strain ATCC 43067 / DSM 2661 / JAL-1 / JCM 10045 / NBRC 100440) (Methanococcus jannaschii)).